The chain runs to 507 residues: Arabinose import ATP-binding protein AraG (507 aa).

ABC transporter domains follow at residues 14–249 (LRFN…MVGR) and 249–505 (RDIQ…LPRT). Residue 46 to 53 (GENGAGKS) coordinates ATP.

Belongs to the ABC transporter superfamily. Arabinose importer (TC 3.A.1.2.2) family. In terms of assembly, the complex is composed of two ATP-binding proteins (AraG), two transmembrane proteins (AraH) and a solute-binding protein (AraF).

It localises to the cell inner membrane. The catalysed reaction is L-arabinose(out) + ATP + H2O = L-arabinose(in) + ADP + phosphate + H(+). Functionally, part of the ABC transporter complex AraFGH involved in arabinose import. Responsible for energy coupling to the transport system. The protein is Arabinose import ATP-binding protein AraG of Pseudomonas savastanoi pv. phaseolicola (strain 1448A / Race 6) (Pseudomonas syringae pv. phaseolicola (strain 1448A / Race 6)).